Here is a 2325-residue protein sequence, read N- to C-terminus: MGNQRNRVNLNPFRFWVFELREILREIKNSRYPFNSVGSFIHIFVHQERFLKLLDPRIWSVLRSQGSTGVVLFLVAVLIYRINNRNMIERKNIYLTGLLPIPTNFAGPRNETLEESFLSSNINRLIVSLLHLPKGKRLSESCFLDPKESTRVLPITKWRNWIGKRRDSSQLKGSSDQSRDHFDSIGTEDSEYHTLINQREIQQRKERSSLLDPSFLQTERTEIESDRFSKGLSGSSSKSRLFTEGEKEMNNHLPPEEIEEFLGNPTRSILSFFSDEWSELHLGSNPTERSTVDQKLLKKEQEVSFAPFRRSETKEIVNLFKTMAYLQKTVSIHPISSDPGCDMVPKDELDSEERFQEMADLFTLSITEPDLVYHKGFAFSIDSSVLDQKQFLAEARDESKKKSLLVLPPVFYQENESFYRRIRKRGVQISCGNDLEDPKPKIVVFASNNIVEAVNQYRWIRNLIQIQYSTHGYIRNVLNRFFLMNRSDRNFEYGIQRDQIGNDTLNHRTFMKYTINQHLSNLKKSQKKGSDPLILISRTERSVNRDPNAYRYKWSKGSKNFQEHLEHFVSEQKSRFQVVFDRYRSIRNRYRSIRNRYRSRINQYSSDRSEVSDKKDNRYRSRINQYSSDRSEVSDQKNLAKFRSFVFSKLLLFLSNSLPFFFVSFGNTPPIQRSEIRVSELKGPNDRLCNQFLESIGLQLVYLKKLKPFLLDDHETSQKSKLLFNKKPEGMIDSFHTRNNRGKSLDSYFSMISHDQDNWLNPVKPFHRSSLISSFYKANRLRFLNNPHDFGFFCNKRFPFYVDIKNLDFTYGQFLNILFIRNTKFSLCGDKKKHAFLERDTISSIESQVSNLFKDFPQSGDERYNFYKYFHLAMRSDPLVRRAIYSIADISGTPLTEGQRVNFERTYCQPLSDMNLSDSEGKNLYQYLNFNSNMGLIYSEKCFSSEKRKKKKPEKRKEKKPEKRKEKKPEKRKEKKPEKRKEKKPEKRKEKKPEKRKEKKPEKRKEKKQSLYLKQWVEKVQMDRALQGERVSLILSNWNLFKTYVMPFSLTSTGYNLLKLMFLDTLGSYVMPLLRSSPKFVSICYAISDPCGISWRILQKKLCLLQWNWISAISNKCFHKLLLSEESIHRNNESPSMTDLRWPNLGAFLYSILFLLFVAGHLVFSHLLFLSQDFSELQRDFARAQSLMIPSYIVELRELLDMYPAPRSFKKLFLAAREKLVNYLRWGGGRKSFLIHLFELLNITPNPIDRIAFLKNTRHLSHTSKELYSLITELGDFSSLCSGQRYRYDQIIENVNGPCCLIDDKIESWISNCDAIEDKEREFLVPFCNFTRETRIDQILLSLTHSDHLSNNDSASQMSEEPGAFYLRHLVDIHKKGLMNYECNTSCLAERRIFLAHYQTITYSPCGDNRSHFPSHGKTFSLRLPLHPSRATLVIGSIGSGRSYLVKSLATNSYVPLITVVLNKFLKNWTPQGFDIHESGVYDEYGDDAEEANDYGASFFDFLDNDSDDYEDRDSDDYDEPGASDDYEPGDMEDFVDSEMTEWLTKTNVPLVYQLLDDEIDEFYITLQFELAKAMSPCILWIPNIHDLDAKESDYLSLGLLVNHLSRDCGRRSTKNEILVIASTHIPQKVDPSLIGPDGLSTCIKTRRLLVPQQQQCLFTLSYTRGFHLENKMFHTHTNEFESTILGPSVPDLVALTNEALSISITQKKSIIDTTTIRYALHRKTWDLEADRNLSPAKEHGTLFYQVGRAFAHTVLLRNCPIDPISIYIKKNLCEAGDSSLYKWYFELGTSMKKLTILLYLLTCSAGSIAQDLLSPPGPDEQNLITSYGLVENDSDLVHGLSDIVHGLLELEGALVGSSPTEEEVEGTEEEVEGTEEEVEGTEEEVEGTEEEVEGTEDEEVEGTEEEVEGTEDEEGEGTEEEVEGTEDEEGEGTEEEVEGTEDEEGEGTEEEVEGTEEEVEGTEEEVEGTEDEEGEGTEKDSSQFDNDRVTLLLRPKPRNPLDIQRLIYQHQKYESELEEDDDDDEDVFAPQKMLEDLFSELVWSPRIWHPWDFILDCEAEIPAEEIPEEEDPLPEEALETEVAVWGEEEEGEADDEEDERLEAQQEDELLEEEDEELKEEEDELHEEEEEEEEEEEEEEEDELHEEEEEEEEEDELQENDSEFFRSETQQPQARDGFSEEEGCFRISQFMWVPGDPLSFLYKDTPFVEVLSYPEEATEISKELLRLLNPKTKRDAPKRARQRWWTKKKQDKHYELVLDRQRWLITKSSLSKSNGFFRSNTPSESYQYLSNLFLSNRRLLDQITKTFFRKKWLFPDEMKIGFMEQ.

Disordered stretches follow at residues 168–189 (SSQL…GTED), 221–251 (TEIE…EMNN), and 947–1006 (KRKK…KRKE). Low complexity predominate over residues 230–240 (KGLSGSSSKSR). Composition is skewed to basic and acidic residues over residues 241 to 250 (LFTEGEKEMN) and 955 to 1004 (KRKE…PEKR). Residue 1436–1443 (GSIGSGRS) participates in ATP binding. Disordered stretches follow at residues 1510–1529 (YEDR…DYEP), 1855–1996 (LVGS…LLRP), and 2063–2179 (PAEE…DGFS). Residues 1861 to 1976 (TEEEVEGTEE…VEGTEDEEGE (116 aa)) show a composition bias toward acidic residues. The segment covering 1977 to 1989 (GTEKDSSQFDNDR) has biased composition (basic and acidic residues). 2 stretches are compositionally biased toward acidic residues: residues 2063–2080 (PAEE…EALE) and 2087–2162 (GEEE…ENDS).

It belongs to the Ycf2 family.

The protein localises to the plastid. It is found in the chloroplast stroma. Its function is as follows. Probable ATPase of unknown function. Its presence in a non-photosynthetic plant (Epifagus virginiana) and experiments in tobacco indicate that it has an essential function which is probably not related to photosynthesis. The polypeptide is Protein Ycf2 (Oenothera biennis (German evening primrose)).